The following is a 747-amino-acid chain: Polyribonucleotide nucleotidyltransferase (747 aa).

Residues D487 and D493 each contribute to the Mg(2+) site. Residues 554–613 form the KH domain; that stretch reads PSTTTIKIDKDKIRDIIGPGGKVIKEICETSGAKIDISDDGSVSVYASDRDKLKVALDKI. An S1 motif domain is found at 623-691; sequence GEIFNGTVMK…NKGKAKLTIK (69 aa). A disordered region spans residues 691–747; it reads KNADKDKSSNNPKPKNNVNNAKENSEPERRDSSKKRAWNEDSNNDKEEAITERKYFN. The segment covering 699–712 has biased composition (low complexity); that stretch reads SNNPKPKNNVNNAK. The span at 727 to 747 shows a compositional bias: basic and acidic residues; it reads AWNEDSNNDKEEAITERKYFN.

It belongs to the polyribonucleotide nucleotidyltransferase family. Requires Mg(2+) as cofactor.

It localises to the cytoplasm. The enzyme catalyses RNA(n+1) + phosphate = RNA(n) + a ribonucleoside 5'-diphosphate. Functionally, involved in mRNA degradation. Catalyzes the phosphorolysis of single-stranded polyribonucleotides processively in the 3'- to 5'-direction. The polypeptide is Polyribonucleotide nucleotidyltransferase (Rickettsia felis (strain ATCC VR-1525 / URRWXCal2) (Rickettsia azadi)).